A 69-amino-acid chain; its full sequence is Beta-defensin 11 (69 aa).

Positions 1–23 are cleaved as a signal peptide; the sequence is MRTLCSLLLIGCLLFSYDTPVVG. 3 cysteine pairs are disulfide-bonded: C35–C64, C42–C57, and C47–C65.

This sequence belongs to the beta-defensin family.

Its subcellular location is the secreted. Functionally, has antibacterial activity. The protein is Beta-defensin 11 (Defb11) of Rattus norvegicus (Rat).